The following is a 180-amino-acid chain: Large ribosomal subunit protein uL6 (180 aa).

The protein belongs to the universal ribosomal protein uL6 family. Part of the 50S ribosomal subunit.

Functionally, this protein binds to the 23S rRNA, and is important in its secondary structure. It is located near the subunit interface in the base of the L7/L12 stalk, and near the tRNA binding site of the peptidyltransferase center. The chain is Large ribosomal subunit protein uL6 from Anaeromyxobacter sp. (strain Fw109-5).